A 189-amino-acid polypeptide reads, in one-letter code: uncharacterized protein (189 aa).

The stretch at 31 to 54 (KCENIDDLANRYEVSKQEVEKVFK) forms a coiled coil. 4 consecutive EF-hand domains span residues 47-82 (QEVEKVFKIFQLMDDDGSGTISSSEVAKMLNELGID), 83-118 (VSPKVVQAVMRSSDVSGDGQIDFEEFLAAVTSKIKL), 120-155 (TVKADVQLMLSKIDNNPEKVISAEELVVAWSETVST), and 157-189 (ITVKEACALIQQADTQGRGKATIHEFITMCQTV). Residues aspartate 60, aspartate 62, serine 64, threonine 66, glutamate 71, aspartate 96, serine 98, aspartate 100, glutamine 102, glutamate 107, aspartate 133, asparagine 135, glutamate 137, and glutamate 144 each contribute to the Ca(2+) site.

This is an uncharacterized protein from Caenorhabditis elegans.